A 1978-amino-acid polypeptide reads, in one-letter code: Protein MOR1 (1978 aa).

HEAT repeat units lie at residues 48–86 (DPRL…AADS) and 165–202 (IPPK…WIGK). Positions 230 to 264 (AGAKPTRKIRSEQDKEPEAEASSDVVGDGPSEEAV) are disordered. Residues 238–247 (IRSEQDKEPE) show a composition bias toward basic and acidic residues. HEAT repeat units follow at residues 322-359 (GDFS…GLRT), 363-400 (ASSR…AGCL), and 442-479 (KAHK…SVGM). The tract at residues 501–587 (IAGSGGGDQA…SVEPPEDVEP (87 aa)) is disordered. Residues 510–527 (AGTSSVTVQSSVGSTATG) are compositionally biased toward low complexity. Basic and acidic residues predominate over residues 565–577 (GKKDGSVRNEGSK). HEAT repeat units lie at residues 849–886 (DIST…EANK), 890–928 (PTGT…AMGP), 932–969 (KASK…AVHL), and 1008–1045 (VDAI…VSGQ). The disordered stretch occupies residues 1087–1115 (SKGVTKISKSTSNGTLKQGNRSRAVPTKG). Over residues 1093–1107 (ISKSTSNGTLKQGNR) the composition is skewed to polar residues. 4 HEAT repeats span residues 1230 to 1253 (LKVL…MTEA), 1254 to 1286 (EAAI…QIIQ), 1287 to 1325 (AYSV…TCGT), and 1328 to 1365 (GGLL…ILGA). Residues 1393–1403 (MEKRREGKPGE) are compositionally biased toward basic and acidic residues. Positions 1393-1431 (MEKRREGKPGEARAALRRSVRDSGPEVAEQSGDISQTVP) are disordered. An HEAT 14 repeat occupies 1535–1575 (RSCKYVLNTLMQTFQNKKLAHAVKEGTLESLITELLLWLLD). The disordered stretch occupies residues 1837–1862 (AAAGRTPSSLPLSTPPPSSLALPSPD).

This sequence belongs to the TOG/XMAP215 family. Expressed in roots, cotyledons, rosette leaves, stems, open flowers and green siliques.

It localises to the cytoplasm. Its subcellular location is the cytoskeleton. The protein localises to the phragmoplast. It is found in the spindle. Microtubule-binding protein that is essential for cortical microtubules organization and function. Essential for maintaining the interphase cortical array and for correct morphogenesis. Promotes rapid growth and shrinkage of microtubules and suppresses the pausing of interphase microtubules. Regulates the structure and function of microtubule arrays during mitosis and cytokinesis. Probably not required for cellulose microfibrils alignment in roots. The polypeptide is Protein MOR1 (MOR1) (Arabidopsis thaliana (Mouse-ear cress)).